The chain runs to 776 residues: GATOR2 complex protein Wdr24 (776 aa).

6 WD repeats span residues 63 to 103 (NLSY…RQKQ), 109 to 149 (EHER…SINT), 152 to 192 (CNSE…KCMV), 196 to 235 (AHYG…GLEH), 238 to 280 (HTIA…IPFA), and 284 to 326 (EHTN…ALKA). Residues 466 to 490 (HRSSFSNQKNPMNSRRATQVASDWP) form a disordered region. Residues 469-490 (SFSNQKNPMNSRRATQVASDWP) are compositionally biased toward polar residues. A C4-type zinc finger spans residues 703-726 (NCGECGRPMGGKVGWYCDKCKSMQ). The Zn(2+) site is built by C704, C707, C719, C722, C730, C733, C744, C747, H749, H752, H755, C766, C769, H771, and C773. The RING-type; atypical zinc finger occupies 728–776 (AKCCVCGLIVRGVYAWCQGCSHGGHIEHLQKYFAKHSKCPKCGHLCAYS).

The protein belongs to the WD repeat WDR24 family. Component of the GATOR complex consisting of mio, Nup44A/Seh1, Im11, Nplr3, Nplr2, Wdr24, Wdr59 and Sec13. Within the GATOR complex, probable component of the GATOR2 subcomplex which is likely composed of mio, Nup44A/Seh1, Wdr24, Wdr59 and Sec13. Interacts with Nup44A/Seh1. Interacts with mio. Interacts with Nplr3. The GATOR2 complex associates with unmet in the absence of S-adenosyl-L-methionine; the mio-Wdr24-Nup44A subcomplex is essential and sufficient for this interaction while Wdr59 and Sec13 are dispensable. This association acts as a nutrient sensor to inhibit mTORC1 signaling in the absence of methionine.

It localises to the lysosome. The protein localises to the cytoplasmic vesicle. The protein resides in the autophagosome. The enzyme catalyses S-ubiquitinyl-[E2 ubiquitin-conjugating enzyme]-L-cysteine + [acceptor protein]-L-lysine = [E2 ubiquitin-conjugating enzyme]-L-cysteine + N(6)-ubiquitinyl-[acceptor protein]-L-lysine.. The protein operates within protein modification; protein ubiquitination. Its function is as follows. An essential component of the GATOR subcomplex GATOR2 which functions as an activator of the amino acid-sensing branch of the mTORC1 signaling pathway. The two GATOR subcomplexes, GATOR1 and GATOR2, regulate the mTORC1 pathway in order to mediate metabolic homeostasis, female gametogenesis and the response to amino acid limitation and complete starvation. GATOR2 activates the mTORC1 signaling pathway through the inhibition of the GATOR1 subcomplex, controlling the switch to cell proliferation and growth under nutrient replete conditions and during female oocyte development. GATOR2 probably acts as an E3 ubiquitin-protein ligase toward GATOR1. In the presence of abundant amino acids, the GATOR2 complex mediates ubiquitination of components of the GATOR1 complex, leading to GATOR1 inactivation. This GATOR2 component is required for activating mTORC1 and promoting cell growth in both germline and somatic cells. In addition to its role in regulation of the mTORC1 complex, functions independently of mTORC1 to promote the acidification of lysosomes and facilitates autophagic flux. This chain is GATOR2 complex protein Wdr24, found in Drosophila melanogaster (Fruit fly).